A 415-amino-acid chain; its full sequence is Mitogen-activated protein kinase kinae MST7 (415 aa).

Residues 1–37 (MADPFAPRTMKRRNVKGLALTPAAPKPPPTAENAPIH) form a disordered region. A Protein kinase domain is found at 61–326 (LEVIKDLGSG…EELFERDPFV (266 aa)). ATP contacts are provided by residues 67–75 (LGSGNGGTV) and lysine 90. A disordered region spans residues 363-409 (DLLRSSDSPTATYHGDDRPLETPTSAYRVDPRRGPAEGSAGLADQVD).

The protein belongs to the protein kinase superfamily. STE Ser/Thr protein kinase family. MAP kinase kinase subfamily. Homodimer. Interacts with the adapter protein MST50. Interacts with TRX2.

It carries out the reaction L-seryl-[protein] + ATP = O-phospho-L-seryl-[protein] + ADP + H(+). The catalysed reaction is L-threonyl-[protein] + ATP = O-phospho-L-threonyl-[protein] + ADP + H(+). Its function is as follows. Mitogen-activated protein kinase kinase; part of the MST11-MST7-PMK1 MAP kinase (MAPK) cascade that is essential for appressorium formation, penetration and invasive growth. The MST11-MST7-PMK1 MAP kinase cascade transduces signals from the cell surface sensors MDB2 and SHO1 that recognize various surface signals such as surface hydrophobicity, cutin monomers, and rice leaf waxes. MST7 acts as the upstream MAPKK that directly phosphorylates MAP kinase PMK1. The sequence is that of Mitogen-activated protein kinase kinae MST7 from Pyricularia oryzae (strain 70-15 / ATCC MYA-4617 / FGSC 8958) (Rice blast fungus).